The following is a 132-amino-acid chain: Fluoride-specific ion channel FluC 2 (132 aa).

4 consecutive transmembrane segments (helical) span residues 5-25 (VAVFIGGAIGSLLRYAVNLLG), 34-54 (TFIENTSGSLLLGLLTGFFAA), 59-79 (PLVQLCLGTGFCGGYTTMSAF), and 95-115 (VLYLMASLACGVCFAFLGIVI). Na(+) contacts are provided by Gly-71 and Thr-74.

The protein belongs to the fluoride channel Fluc/FEX (TC 1.A.43) family.

Its subcellular location is the cell membrane. The enzyme catalyses fluoride(in) = fluoride(out). Na(+) is not transported, but it plays an essential structural role and its presence is essential for fluoride channel function. Fluoride-specific ion channel. Important for reducing fluoride concentration in the cell, thus reducing its toxicity. This chain is Fluoride-specific ion channel FluC 2, found in Bacillus licheniformis (strain ATCC 14580 / DSM 13 / JCM 2505 / CCUG 7422 / NBRC 12200 / NCIMB 9375 / NCTC 10341 / NRRL NRS-1264 / Gibson 46).